Here is a 338-residue protein sequence, read N- to C-terminus: Tryptophan--tRNA ligase (338 aa).

ATP is bound by residues Gln11–Ser13 and Gly19–Asn20. The short motif at Pro12–Asn20 is the 'HIGH' region element. Position 135 (Asp135) interacts with L-tryptophan. ATP-binding positions include Gly147–Asp149, Val189, and Lys198–Ser202. Positions Lys198–Ser202 match the 'KMSKS' region motif.

Belongs to the class-I aminoacyl-tRNA synthetase family. In terms of assembly, homodimer.

It localises to the cytoplasm. It carries out the reaction tRNA(Trp) + L-tryptophan + ATP = L-tryptophyl-tRNA(Trp) + AMP + diphosphate + H(+). Functionally, catalyzes the attachment of tryptophan to tRNA(Trp). The polypeptide is Tryptophan--tRNA ligase (Vibrio vulnificus (strain YJ016)).